A 417-amino-acid polypeptide reads, in one-letter code: Voltage-gated ClC-type chloride channel ClcB (417 aa).

A run of 11 helical transmembrane segments spans residues 5–25 (LLIA…FRHA), 54–74 (LITP…WQKM), 146–166 (LWIA…PLAG), 168–188 (LFIA…PVVI), 190–210 (AVVA…LYTV), 222–242 (AMII…MWLM), 258–278 (WQLA…PAVW), 288–308 (FLLS…KLLA), 316–336 (GAPG…GMLY), 339–359 (MWGF…LTGM), and 380–400 (MTGE…ASVL).

The protein belongs to the chloride channel (TC 2.A.49) family. ClcB subfamily.

The protein localises to the cell inner membrane. Its function is as follows. Probably acts as an electrical shunt for an outwardly-directed proton pump that is linked to amino acid decarboxylation, as part of the extreme acid resistance (XAR) response. The sequence is that of Voltage-gated ClC-type chloride channel ClcB from Citrobacter koseri (strain ATCC BAA-895 / CDC 4225-83 / SGSC4696).